The chain runs to 710 residues: PWWP domain-containing DNA repair factor 3A (710 aa).

The disordered stretch occupies residues 106–160; it reads QESSAGTGRADRSLRGKPMEHVSSPCDSNSSSLPRGDVLGSSRPHRRRPCVQQSL. The span at 114-125 shows a compositional bias: basic and acidic residues; the sequence is RADRSLRGKPME. Over residues 128–137 the composition is skewed to low complexity; sequence SSPCDSNSSS. A Phosphoserine modification is found at Ser161. 2 disordered regions span residues 177–204 and 230–398; these read KKGLRKSENPRGPLVLPAGGGAQDESGS and NGSS…EEPP. Over residues 288–297 the composition is skewed to low complexity; it reads PSACSEPGEC. A phosphoserine mark is found at Ser374 and Ser375. Residues 375–385 are compositionally biased toward polar residues; it reads SEESMGSNSMR. The 62-residue stretch at 411–472 folds into the PWWP domain; sequence VGMLVWHKHK…KHFDCKEKQT (62 aa).

The protein belongs to the PWWP3A family. As to quaternary structure, interacts with TP53BP1 (via BRCT domain); the interaction is not dependent on its phosphorylation status. Binds nucleosomes. Interacts with trimethylated 'Lys-36' of histone H3 (H3K36me3) (in vitro).

The protein resides in the nucleus. In terms of biological role, involved in the DNA damage response pathway by contributing to the maintenance of chromatin architecture. Recruited to the vicinity of DNA breaks by TP53BP1 and plays an accessory role to facilitate damage-induced chromatin changes and promoting chromatin relaxation. Required for efficient DNA repair and cell survival following DNA damage. The polypeptide is PWWP domain-containing DNA repair factor 3A (Homo sapiens (Human)).